A 203-amino-acid polypeptide reads, in one-letter code: MSQANAHEQALALSAAMLAIDDVILLATTGQCPERDLSALLPSLLRQNQARLEDYFLEIAPFEKGRALLVNFLINGVSSEHVRYLIQVTVLEEKLSANRALFAQLLQRLNEAESAAEHFPLLHDAMIARFADIYQASVSPAMRKILIHGNPDYLKQPQIAARVRVCLLCAVRAVGLWRAYGGSKWQVIFFRKRFLKALRALRF.

The protein belongs to the HflD family.

The protein resides in the cytoplasm. The protein localises to the cell inner membrane. This chain is High frequency lysogenization protein HflD homolog, found in Dichelobacter nodosus (strain VCS1703A).